The following is a 406-amino-acid chain: Trk system potassium uptake protein trkA homolog 1 (406 aa).

An RCK N-terminal 1 domain is found at 1–124 (MKAVIIGAGE…RAQVGVDLMI (124 aa)). NAD(+) is bound by residues 7–11 (GAGEV), Asp-29, 70–71 (TG), and Arg-101. Positions 144 to 225 (IDAEMFAEGK…MEDLESVFGS (82 aa)) constitute an RCK C-terminal domain. Positions 230-348 (RTRILLIGCG…FEMVGIDMAV (119 aa)) constitute an RCK N-terminal 2 domain. 232–262 (RILLIGCGIVGMYLAKLIDKEENADLRIIEH) provides a ligand contact to NAD(+).

Functionally, part of a potassium transport system. The protein is Trk system potassium uptake protein trkA homolog 1 (trkA1) of Methanosarcina mazei (Methanosarcina frisia).